We begin with the raw amino-acid sequence, 443 residues long: Autophagy-related protein 13 homolog (443 aa).

Disordered stretches follow at residues A232–H283 and A308–T333. Residues S240–R253 are compositionally biased toward polar residues. Residues E268–H283 are compositionally biased toward basic and acidic residues. Residues A308–S325 are compositionally biased toward polar residues.

Belongs to the ATG13 family. Metazoan subfamily. As to quaternary structure, interacts with unc-51 (via C-terminus). Interacts with lgg-1; the interaction is direct.

The protein localises to the cytoplasm. It is found in the cytosol. Its subcellular location is the preautophagosomal structure. The protein resides in the perikaryon. It localises to the cell projection. The protein localises to the axon. In terms of biological role, component of the unc-51/atg-13 complex required for autophagosome formation. Required for the degradation of germ cell specific P-granule components such as sepa-1 by autophagy in somatic cells. This ensures exclusive localization of the P-granules in germ cells. May function downstream of the let-363 (Tor) signaling pathway to mediate sepa-1 degradation. Plays a role in survival during limited food availability. In Caenorhabditis elegans, this protein is Autophagy-related protein 13 homolog.